A 267-amino-acid chain; its full sequence is Acyl-[acyl-carrier-protein]--UDP-N-acetylglucosamine O-acyltransferase (267 aa).

Belongs to the transferase hexapeptide repeat family. LpxA subfamily. Homotrimer.

Its subcellular location is the cytoplasm. The enzyme catalyses a (3R)-hydroxyacyl-[ACP] + UDP-N-acetyl-alpha-D-glucosamine = a UDP-3-O-[(3R)-3-hydroxyacyl]-N-acetyl-alpha-D-glucosamine + holo-[ACP]. The protein operates within glycolipid biosynthesis; lipid IV(A) biosynthesis; lipid IV(A) from (3R)-3-hydroxytetradecanoyl-[acyl-carrier-protein] and UDP-N-acetyl-alpha-D-glucosamine: step 1/6. In terms of biological role, involved in the biosynthesis of lipid A, a phosphorylated glycolipid that anchors the lipopolysaccharide to the outer membrane of the cell. The protein is Acyl-[acyl-carrier-protein]--UDP-N-acetylglucosamine O-acyltransferase of Hamiltonella defensa subsp. Acyrthosiphon pisum (strain 5AT).